Reading from the N-terminus, the 396-residue chain is Elongation factor Tu (396 aa).

A tr-type G domain is found at 10-205 (KPHVNIGTIG…ACDDSIPDPE (196 aa)). A G1 region spans residues 19–26 (GHVDHGKT). Position 19–26 (19–26 (GHVDHGKT)) interacts with GTP. Threonine 26 is a Mg(2+) binding site. The G2 stretch occupies residues 62–66 (GITIN). Residues 83–86 (DAPG) are G3. GTP contacts are provided by residues 83-87 (DAPGH) and 138-141 (NKCD). The tract at residues 138–141 (NKCD) is G4. The segment at 175 to 177 (SAL) is G5.

This sequence belongs to the TRAFAC class translation factor GTPase superfamily. Classic translation factor GTPase family. EF-Tu/EF-1A subfamily. Monomer.

Its subcellular location is the cytoplasm. It carries out the reaction GTP + H2O = GDP + phosphate + H(+). Its function is as follows. GTP hydrolase that promotes the GTP-dependent binding of aminoacyl-tRNA to the A-site of ribosomes during protein biosynthesis. This Corynebacterium aurimucosum (strain ATCC 700975 / DSM 44827 / CIP 107346 / CN-1) (Corynebacterium nigricans) protein is Elongation factor Tu.